Here is a 607-residue protein sequence, read N- to C-terminus: Rap1 GTPase-GDP dissociation stimulator 1-A (607 aa).

ARM repeat units lie at residues 79-118 (ELMRIPCVEAGLIPPLVQLLHSKDQEVLLQTGRALGNICY), 170-211 (DSLQ…NLAE), 347-390 (DGNC…NLAI), 391-431 (PVVN…MLID), and 479-519 (SKDV…LIAA).

As to quaternary structure, interacts with ralB. Probably interacts with the post-translationally isoprenylated (geranyl-geranylation) forms of ral proteins. Interacts with both GDP-bound and GTP-bound forms of ralA, but interaction is much stronger with ralA-GDP. As to expression, weakly expressed in adult tissues with highest levels found in spleen, kidney, skin and A6 cells.

It localises to the cytoplasm. The protein localises to the cytosol. Its subcellular location is the endoplasmic reticulum. It is found in the mitochondrion. Functionally, stimulates GDP/GTP exchange reaction of a group of small GTP-binding proteins (G proteins) including Rap1a/Rap1b, RhoA, RhoB and KRas, by stimulating the dissociation of GDP from and the subsequent binding of GTP to each small G protein. This Xenopus laevis (African clawed frog) protein is Rap1 GTPase-GDP dissociation stimulator 1-A (rap1gds1-a).